The chain runs to 92 residues: Small ribosomal subunit protein bS18c (92 aa).

The protein belongs to the bacterial ribosomal protein bS18 family. In terms of assembly, part of the 30S ribosomal subunit.

Its subcellular location is the plastid. The chain is Small ribosomal subunit protein bS18c (rps18) from Epifagus virginiana (Beechdrops).